Consider the following 874-residue polypeptide: S-layer protein (874 aa).

Positions 1–30 are cleaved as a signal peptide; it reads MAKTNSYKKVIAGTMTAAMVAGVVSPVAAA. SLH domains are found at residues 31–93, 94–151, and 152–214; these read GKSF…NAQP, SFKD…KVDG, and TLVT…ENSD.

Its subcellular location is the secreted. The protein resides in the cell wall. The protein localises to the S-layer. The S-layer is a paracrystalline mono-layered assembly of proteins which coat the surface of bacteria. This chain is S-layer protein, found in Bacillus licheniformis.